The chain runs to 215 residues: ATP-dependent dethiobiotin synthetase BioD (215 aa).

13–18 (DIGKTV) contacts ATP. A Mg(2+)-binding site is contributed by threonine 17. Residue lysine 38 is part of the active site. Threonine 42 serves as a coordination point for substrate. ATP contacts are provided by residues aspartate 50, 115-118 (EGAG), and 175-176 (NH). Aspartate 50 and glutamate 115 together coordinate Mg(2+).

This sequence belongs to the dethiobiotin synthetase family. In terms of assembly, homodimer. The cofactor is Mg(2+).

Its subcellular location is the cytoplasm. The enzyme catalyses (7R,8S)-7,8-diammoniononanoate + CO2 + ATP = (4R,5S)-dethiobiotin + ADP + phosphate + 3 H(+). The protein operates within cofactor biosynthesis; biotin biosynthesis; biotin from 7,8-diaminononanoate: step 1/2. Its function is as follows. Catalyzes a mechanistically unusual reaction, the ATP-dependent insertion of CO2 between the N7 and N8 nitrogen atoms of 7,8-diaminopelargonic acid (DAPA, also called 7,8-diammoniononanoate) to form a ureido ring. This is ATP-dependent dethiobiotin synthetase BioD from Neisseria meningitidis serogroup C / serotype 2a (strain ATCC 700532 / DSM 15464 / FAM18).